A 206-amino-acid chain; its full sequence is Protein GrpE (206 aa).

This sequence belongs to the GrpE family. As to quaternary structure, homodimer.

It is found in the cytoplasm. Participates actively in the response to hyperosmotic and heat shock by preventing the aggregation of stress-denatured proteins, in association with DnaK and GrpE. It is the nucleotide exchange factor for DnaK and may function as a thermosensor. Unfolded proteins bind initially to DnaJ; upon interaction with the DnaJ-bound protein, DnaK hydrolyzes its bound ATP, resulting in the formation of a stable complex. GrpE releases ADP from DnaK; ATP binding to DnaK triggers the release of the substrate protein, thus completing the reaction cycle. Several rounds of ATP-dependent interactions between DnaJ, DnaK and GrpE are required for fully efficient folding. This is Protein GrpE from Psychromonas ingrahamii (strain DSM 17664 / CCUG 51855 / 37).